A 350-amino-acid polypeptide reads, in one-letter code: uncharacterized protein (350 aa).

Functionally, may play a role in septum formation. This is an uncharacterized protein from Mycobacterium tuberculosis (strain CDC 1551 / Oshkosh).